Reading from the N-terminus, the 181-residue chain is Caveolin-1 (181 aa).

Residues M1 to T107 are Cytoplasmic-facing. Positions A108–I128 form an intramembrane region, helical. Residues H129–V181 lie on the Cytoplasmic side of the membrane. Residues C136, C146, and C159 are each lipidated (S-palmitoyl cysteine).

Belongs to the caveolin family. Homooligomer.

Its subcellular location is the golgi apparatus membrane. It localises to the cell membrane. The protein localises to the membrane. It is found in the caveola. The protein resides in the membrane raft. In terms of biological role, may act as a positive regulator of T-cell coactivation. May act as a scaffolding protein within caveolar membranes. Interacts directly with G-protein alpha subunits and can functionally regulate their activity. The protein is Caveolin-1 (cav1) of Takifugu rubripes (Japanese pufferfish).